Consider the following 1432-residue polypeptide: Probable ATP-dependent RNA helicase spindle-E (1432 aa).

In terms of domain architecture, Helicase ATP-binding spans 125 to 292 (MKAIRENTVV…FATKNGIPPV (168 aa)). Position 138–145 (138–145 (GETGCGKT)) interacts with ATP. The DEAH box signature appears at 238 to 241 (DEVH). The Helicase C-terminal domain maps to 342 to 525 (VIDNMERRTE…SSVLKAKELN (184 aa)). The region spanning 936 to 999 (AGSITKNLKL…RFMSNQLKRE (64 aa)) is the Tudor domain.

This sequence belongs to the DEAD box helicase family. DEAH subfamily.

The protein localises to the cytoplasm. The catalysed reaction is ATP + H2O = ADP + phosphate + H(+). Functionally, probable ATP-binding RNA helicase which plays a central role during spermatogenesis and oogenesis by repressing transposable elements and preventing their mobilization, which is essential for the germline integrity. Acts via the piRNA metabolic process, which mediates the repression of transposable elements during meiosis by forming complexes composed of piRNAs and Piwi and govern the methylation and subsequent repression of transposons. Involved in the repression of LTR retrotransposon copia. Also involved in telomere regulation by repressing specialized telomeric retroelements HeT-A, TAHRE, and TART; Drosophila telomeres being maintained by transposition of specialized telomeric retroelements. Involved in telomeric trans-silencing, a repression mechanism by which a transposon or a transgene inserted in subtelomeric heterochromatin has the capacity to repress in trans in the female germline, a homologous transposon, or transgene located in euchromatin. Involved in the repression of testis-expressed Stellate genes by the homologous Su(Ste) repeats. Required for anteroposterior and dorsoventral axis formation during oogenesis. The sequence is that of Probable ATP-dependent RNA helicase spindle-E (spn-E) from Drosophila willistoni (Fruit fly).